The sequence spans 289 residues: Deoxyuridine 5'-triphosphate nucleotidohydrolase (289 aa).

Residues 176-178 (RSG) and 283-284 (FG) each bind substrate.

The protein belongs to the dUTPase family. Mg(2+) is required as a cofactor.

The enzyme catalyses dUTP + H2O = dUMP + diphosphate + H(+). In terms of biological role, involved in nucleotide metabolism: produces dUMP, the immediate precursor of thymidine nucleotides and decreases the intracellular concentration of dUTP to avoid uracil incorporation into viral DNA. The sequence is that of Deoxyuridine 5'-triphosphate nucleotidohydrolase from Equus caballus (Horse).